A 320-amino-acid polypeptide reads, in one-letter code: Malate dehydrogenase (320 aa).

Residues 10-15 (GAGQIG) and Asp34 each bind NAD(+). Residues Arg83 and Arg89 each coordinate substrate. NAD(+) is bound by residues Asn96 and 119–121 (ITN). The substrate site is built by Asn121 and Arg152. His176 serves as the catalytic Proton acceptor.

This sequence belongs to the LDH/MDH superfamily. MDH type 3 family.

The catalysed reaction is (S)-malate + NAD(+) = oxaloacetate + NADH + H(+). Functionally, catalyzes the reversible oxidation of malate to oxaloacetate. The chain is Malate dehydrogenase from Methylobacterium sp. (strain 4-46).